Consider the following 254-residue polypeptide: 3-deoxy-manno-octulosonate cytidylyltransferase (254 aa).

The protein belongs to the KdsB family.

The protein localises to the cytoplasm. It carries out the reaction 3-deoxy-alpha-D-manno-oct-2-ulosonate + CTP = CMP-3-deoxy-beta-D-manno-octulosonate + diphosphate. Its pathway is nucleotide-sugar biosynthesis; CMP-3-deoxy-D-manno-octulosonate biosynthesis; CMP-3-deoxy-D-manno-octulosonate from 3-deoxy-D-manno-octulosonate and CTP: step 1/1. It functions in the pathway bacterial outer membrane biogenesis; lipopolysaccharide biosynthesis. Functionally, activates KDO (a required 8-carbon sugar) for incorporation into bacterial lipopolysaccharide in Gram-negative bacteria. The protein is 3-deoxy-manno-octulosonate cytidylyltransferase of Haemophilus influenzae (strain 86-028NP).